The primary structure comprises 176 residues: Adenylyl-sulfate kinase (176 aa).

Residue 12–19 (GLSGAGKS) coordinates ATP. The Phosphoserine intermediate role is filled by S86.

The protein belongs to the APS kinase family.

It carries out the reaction adenosine 5'-phosphosulfate + ATP = 3'-phosphoadenylyl sulfate + ADP + H(+). Its pathway is sulfur metabolism; hydrogen sulfide biosynthesis; sulfite from sulfate: step 2/3. Catalyzes the synthesis of activated sulfate. This is Adenylyl-sulfate kinase from Gloeothece citriformis (strain PCC 7424) (Cyanothece sp. (strain PCC 7424)).